We begin with the raw amino-acid sequence, 67 residues long: Large ribosomal subunit protein uL29 (67 aa).

This sequence belongs to the universal ribosomal protein uL29 family.

This is Large ribosomal subunit protein uL29 from Methanothrix thermoacetophila (strain DSM 6194 / JCM 14653 / NBRC 101360 / PT) (Methanosaeta thermophila).